The following is a 183-amino-acid chain: Translation initiation factor IF-3 (183 aa).

Belongs to the IF-3 family. As to quaternary structure, monomer.

The protein localises to the cytoplasm. IF-3 binds to the 30S ribosomal subunit and shifts the equilibrium between 70S ribosomes and their 50S and 30S subunits in favor of the free subunits, thus enhancing the availability of 30S subunits on which protein synthesis initiation begins. The protein is Translation initiation factor IF-3 of Pseudomonas fluorescens (strain SBW25).